The chain runs to 348 residues: Protein disulfide isomerase CRELD2 (348 aa).

The first 22 residues, 1–22 (MHLPPAAAVGLLLLLLPPPARV), serve as a signal peptide directing secretion. A CXXC motif is present at residues 30–33 (CQRC). 4 disulfide bridges follow: Cys30–Cys33, Cys139–Cys153, Cys147–Cys165, and Cys167–Cys176. The EGF-like 1 domain occupies 135 to 177 (DCQECQGGSQRPCSGNGHCDGDGSRQGDGSCQCHVGYKGPLCI). The stretch at 192 to 239 (HSFCTACDESCKTCSGPTNKGCVECEVGWTRVEDACVDVDECAAETPP) is one FU 1 repeat. Asn250 carries N-linked (GlcNAc...) asparagine glycosylation. An FU 2 repeat occupies 252 to 299 (SYTCEECDSTCVGCTGKGPANCKECISGYSKQKGECADIDECSLETKV). The CXXC signature appears at 262 to 265 (CVGC). 4 cysteine pairs are disulfide-bonded: Cys262–Cys265, Cys293–Cys307, Cys300–Cys316, and Cys318–Cys328. The region spanning 289–329 (DIDECSLETKVCKKENENCYNTPGSFVCVCPEGFEEDRRCL) is the EGF-like 2; calcium-binding domain.

The protein belongs to the CRELD family. Interacts with CHRNA4. Component of a complex containing at least CRELD2, MANF, MATN3 and PDIA4.

It localises to the endoplasmic reticulum. It catalyses the reaction Catalyzes the rearrangement of -S-S- bonds in proteins.. Protein disulfide isomerase. Might play a role in the unfolded protein response. May regulate transport of alpha4-beta2 neuronal acetylcholine receptor. This Cricetulus griseus (Chinese hamster) protein is Protein disulfide isomerase CRELD2 (CRELD2).